The chain runs to 289 residues: Splicing factor C9orf78 (289 aa).

The segment covering 1-12 has biased composition (basic residues); sequence MPVVRKIFRRRR. The segment at 1–27 is disordered; it reads MPVVRKIFRRRRGDSESEEDEQDSEEV. The interval 5 to 58 is interaction with SNRNP200; sequence RKIFRRRRGDSESEEDEQDSEEVRLKLEETREVQNLRKRPNGVSAVALLVGEKV. 2 positions are modified to phosphoserine: serine 15 and serine 17. Tyrosine 147 is modified (phosphotyrosine). The span at 232–283 shows a compositional bias: basic and acidic residues; that stretch reads LNAPIRRNKEEPKARPLRVGDTEKPEPERSPPNRKRPANEKATDDYHYEKFK. The segment at 232 to 289 is disordered; that stretch reads LNAPIRRNKEEPKARPLRVGDTEKPEPERSPPNRKRPANEKATDDYHYEKFKKMNRRY. Phosphothreonine is present on threonine 253. Serine 261 carries the post-translational modification Phosphoserine.

This sequence belongs to the TLS1 family. Component of the spliceosome. Interacts with SNRNP200; the interaction is direct. Interacts with PRPF8.

It is found in the nucleus. The protein localises to the chromosome. Its subcellular location is the centromere. In terms of biological role, plays a role in pre-mRNA splicing by promoting usage of the upstream 3'-splice site at alternative NAGNAG splice sites; these are sites featuring alternative acceptor motifs separated by only a few nucleotides. May also modulate exon inclusion events. Plays a role in spliceosomal remodeling by displacing WBP4 from SNRNP200 and may act to inhibit SNRNP200 helicase activity. Binds U5 snRNA. Required for proper chromosome segregation. Not required for splicing of shelterin components. This chain is Splicing factor C9orf78 (C9orf78), found in Homo sapiens (Human).